The primary structure comprises 470 residues: Amino-acid permease RocC (470 aa).

A run of 12 helical transmembrane segments spans residues 18–38 (FMIA…GFTI), 44–64 (LGAI…MLCL), 90–110 (GFMI…LELT), 119–139 (WLPS…IFLI), 159–179 (VAAI…LIDF), 196–216 (GLFP…NFSF), 243–263 (VIWR…AILP), 281–301 (IGIP…ILSV), 338–358 (ALLI…MAAE), 360–380 (VYLW…MSIC), 409–429 (LVPI…IFIP), and 433–453 (IGLY…HLSI).

The protein belongs to the amino acid-polyamine-organocation (APC) superfamily.

Its subcellular location is the cell membrane. Its function is as follows. Putative transport protein involved in arginine degradative pathway. Probably transports arginine or ornithine. The polypeptide is Amino-acid permease RocC (rocC) (Bacillus subtilis (strain 168)).